The primary structure comprises 92 residues: Small ribosomal subunit protein uS19c (92 aa).

This sequence belongs to the universal ribosomal protein uS19 family.

The protein resides in the plastid. It is found in the chloroplast. Functionally, protein S19 forms a complex with S13 that binds strongly to the 16S ribosomal RNA. This Adiantum capillus-veneris (Maidenhair fern) protein is Small ribosomal subunit protein uS19c.